A 185-amino-acid chain; its full sequence is Ribosome-recycling factor (185 aa).

Residues 138–185 (ALKKQEKDGEITEDEERRLEKEVQKVTDESTKKIDQMADNKRKEIIQG) form a disordered region.

This sequence belongs to the RRF family.

It localises to the cytoplasm. Responsible for the release of ribosomes from messenger RNA at the termination of protein biosynthesis. May increase the efficiency of translation by recycling ribosomes from one round of translation to another. This is Ribosome-recycling factor from Lactobacillus delbrueckii subsp. bulgaricus (strain ATCC BAA-365 / Lb-18).